The following is a 345-amino-acid chain: uncharacterized protein (345 aa).

The protein belongs to the methyltransferase superfamily.

This is an uncharacterized protein from Streptomyces fradiae (Streptomyces roseoflavus).